The primary structure comprises 484 residues: Glutamyl-tRNA(Gln) amidotransferase subunit B, mitochondrial (484 aa).

This sequence belongs to the GatB/GatE family. GatB subfamily. In terms of assembly, subunit of the heterotrimeric GatFAB amidotransferase (AdT) complex, composed of A, B and F subunits.

The protein localises to the mitochondrion. It catalyses the reaction L-glutamyl-tRNA(Gln) + L-glutamine + ATP + H2O = L-glutaminyl-tRNA(Gln) + L-glutamate + ADP + phosphate + H(+). Its function is as follows. Allows the formation of correctly charged Gln-tRNA(Gln) through the transamidation of misacylated Glu-tRNA(Gln) in the mitochondria. The reaction takes place in the presence of glutamine and ATP through an activated gamma-phospho-Glu-tRNA(Gln). The chain is Glutamyl-tRNA(Gln) amidotransferase subunit B, mitochondrial from Candida tropicalis (strain ATCC MYA-3404 / T1) (Yeast).